Reading from the N-terminus, the 1225-residue chain is Structural maintenance of chromosomes protein 1 (1225 aa).

33–40 serves as a coordination point for ATP; it reads GPNGSGKS. Residues 173 to 489 adopt a coiled-coil conformation; that stretch reads SGSIQYKKEY…SANNQEYDLN (317 aa). The SMC hinge domain maps to 527 to 641; it reads PGVKGLVHDL…CNTLNIAKDL (115 aa). A coiled-coil region spans residues 679 to 1063; the sequence is KEEYQSLMSL…LKIKKKRKEL (385 aa). The Nuclear localization signal motif lies at 1057 to 1061; that stretch reads KKKRK.

It belongs to the SMC family. SMC1 subfamily. Cohesin complexes are composed of the SMC1 and SMC3 heterodimer attached via their SMC hinge domain, MCD1/SCC1 which link them, and IRR1/SCC3, which interacts with MCD1. The cohesin complex also interacts with SCC2, which is required for its association with chromosomes.

The protein localises to the nucleus. It localises to the chromosome. Involved in chromosome cohesion during cell cycle and in DNA repair. Central component of cohesin complex. The cohesin complex is required for the cohesion of sister chromatids after DNA replication. The cohesin complex apparently forms a large proteinaceous ring within which sister chromatids can be trapped. At anaphase, the complex is cleaved and dissociates from chromatin, allowing sister chromatids to segregate. In Saccharomyces cerevisiae (strain ATCC 204508 / S288c) (Baker's yeast), this protein is Structural maintenance of chromosomes protein 1 (SMC1).